The chain runs to 994 residues: MVLDKILRAGEGRILRKLKAIAEQVNLIEDDFTGLSDGELRGMTDEFRQRLADGKETLDDLLPEAFAAVREAARRTLGQRHFDVQIMGGAALHLGNIAEMKTGEGKTLVSTLPTYLNALAGKGVHVITVNDYLAQRDAENMGRVHRFLGLTVGVIHPQMPPPVRRAQYACDITYGTNNEFGFDYLRDNMAWSSEELVQRGHNFAVVDEVDSILIDEARTPLIISGPADHPTRWYTEFARIAPLLERDVDYEVEEGKRTVAITESGVEKVEDQLGIENLYESVNTPLVGYLNNSLKAKELYKRDKDYIVTDGEVLIVDEFTGRVLHGRRYSEGMHQAIEAKEKVEIKQENQTLATITLQNYFRLYDKLSGMTGTAMTEAAEFHQIYSLGVVPIPTNKPMVRLDQPDVVYKTEIAKFDAVVEDIAERHEKGQPVLVGTTSVEKSEYLSKQLRKRGVPHEVLNAKHHEREAAIIAEAGRKGAVTVATNMAGRGTDIMLGGNPEFIAQAELRQRGLSPIETPEDYEAAWQEALEKARQSVKAEHEEVVDAGGLYVLGTERHESRRIDNQLRGRAGRQGDRGESRFYLSLGDDLMRLFNAAAVEGIMDRLNIPEDVPIESKIVTRAIRSAQTQVEGQNFEIRKNVLKYDEVMNKQRTVIYEERRKVLGGADLHEQVRHFVDDTVEGYVRGATADGYPEEWDLDTLWTALGQLYPVGVVAPDVDDRDGLTADHLLEDIQVDAQEAYDRRELDLGDGPDSEPIMRELERRVVLAVLDRKWREHLYEMDYLQEGIGLRAMGQRDPLVEYQREGFDMFQTMMEGIKEESVRLLFNVEVQVAGQEEAATSVGVEPAVSAAPAPPAAAATLPAPAVPTIPDGAGPVADAQPVRPAAARQTPPPPSPVPSAPLPVFVKGLEPRRPTGGLRYTAPSVDGGSGPVTTVDGRSGLGRPAGDGALSAARGEAGTAQPGAGTRPARNAPCPCGSGRKYKRCHGDPARRNTE.

ATP is bound by residues Gln85, 103–107, and Asp492; that span reads GEGKT. Residues 868–888 show a composition bias toward low complexity; it reads IPDGAGPVADAQPVRPAAARQ. Positions 868–994 are disordered; the sequence is IPDGAGPVAD…HGDPARRNTE (127 aa). The segment covering 889 to 900 has biased composition (pro residues); sequence TPPPPSPVPSAP. Positions 973, 975, 984, and 985 each coordinate Zn(2+). Residues 984–994 show a composition bias toward basic and acidic residues; it reads CHGDPARRNTE.

It belongs to the SecA family. As to quaternary structure, monomer and homodimer. Part of the essential Sec protein translocation apparatus which comprises SecA, SecYEG and auxiliary proteins SecDF. Other proteins may also be involved. The cofactor is Zn(2+).

It localises to the cell membrane. The protein resides in the cytoplasm. The catalysed reaction is ATP + H2O + cellular proteinSide 1 = ADP + phosphate + cellular proteinSide 2.. Part of the Sec protein translocase complex. Interacts with the SecYEG preprotein conducting channel. Has a central role in coupling the hydrolysis of ATP to the transfer of proteins into and across the cell membrane, serving as an ATP-driven molecular motor driving the stepwise translocation of polypeptide chains across the membrane. This chain is Protein translocase subunit SecA, found in Frankia casuarinae (strain DSM 45818 / CECT 9043 / HFP020203 / CcI3).